The following is a 303-amino-acid chain: Beta-carotene 3-hydroxylase 2, chloroplastic (303 aa).

Residues 1 to 52 (MAAGLSTIAVTLKPLNRSSFSANHPISTAVFPPSLRFNGFRRRKILTVCFVV) constitute a chloroplast transit peptide. Transmembrane regions (helical) follow at residues 96–116 (YLIAAVMSSFGITSMAIMAVY) and 130–150 (VLEMFGTFALSVGAAVGMEFW). In terms of domain architecture, Fatty acid hydroxylase spans 143-270 (AAVGMEFWAR…KFKGVPYGLF (128 aa)). The Histidine box-1 motif lies at 155-160 (HRALWH). Positions 165 to 171 (NMHESHH) match the Histidine box-2 motif. 2 helical membrane passes run 180 to 200 (LNDVFAITNAVPAIGLLYYGF) and 206 to 226 (VPGLCFGAGLGITMFGMAYMF). The Histidine box-3 signature appears at 228-233 (HDGLVH). Residues 254–258 (HQLHH) carry the Histidine box-4 motif.

It belongs to the sterol desaturase family. As to quaternary structure, homodimer. As to expression, expressed in leaves, flowers, stems, roots and siliques.

The protein localises to the plastid. Its subcellular location is the chloroplast membrane. It carries out the reaction all-trans-beta-carotene + 4 reduced [2Fe-2S]-[ferredoxin] + 2 O2 + 4 H(+) = all-trans-zeaxanthin + 4 oxidized [2Fe-2S]-[ferredoxin] + 2 H2O. In terms of biological role, nonheme diiron monooxygenase involved in the biosynthesis of xanthophylls. Specific for beta-ring hydroxylations of beta-carotene. Also has a low activity toward the beta- and epsilon-rings of alpha-carotene. No activity with acyclic carotenoids such as lycopene and neurosporene. Uses ferredoxin as an electron donor. This chain is Beta-carotene 3-hydroxylase 2, chloroplastic (BETA-OHASE 2), found in Arabidopsis thaliana (Mouse-ear cress).